The primary structure comprises 264 residues: Merozoite surface protein 2 (264 aa).

The signal sequence occupies residues 1 to 20; the sequence is MKVIKTLSIINFFIFVTFNI. N-linked (GlcNAc...) asparagine glycans are attached at residues N22 and N36. Residues 44 to 190 form a polymorphic region region; that stretch reads ANEGSNTNSV…PQTAENENPA (147 aa). A disordered region spans residues 46–225; the sequence is EGSNTNSVGA…DSQKECTDGN (180 aa). A run of 2 repeats spans residues 60 to 91 and 92 to 123. The tract at residues 60-123 is 2 X 32 AA perfects repeats; the sequence is ADTIASGSQR…GESQTTTPTA (64 aa). The segment covering 70-81 has biased composition (low complexity); sequence STNSASTSTTNN. Positions 82 to 101 are enriched in polar residues; the sequence is GESQTTTPTAADTIASGSQR. The span at 102 to 145 shows a compositional bias: low complexity; it reads STNSASTSTTNNGESQTTTPTAADTPTTTESNSPSPPITTTESS. N152 is a glycosylation site (N-linked (GlcNAc...) asparagine). A compositionally biased stretch (basic and acidic residues) spans 154 to 166; it reads TDGKGEESEKQNE. Residues N168 and N213 are each glycosylated (N-linked (GlcNAc...) asparagine). A disulfide bond links C221 and C229. Residues N237 and N238 are each glycosylated (N-linked (GlcNAc...) asparagine). N238 is lipidated: GPI-anchor amidated asparagine. A propeptide spans 239–264 (removed in mature form); it reads SSNIASINKFVVLISATLVLSFAIFI.

It is found in the cell membrane. Functionally, may play a role in the merozoite attachment to the erythrocyte. In Plasmodium falciparum (isolate fid3 / India), this protein is Merozoite surface protein 2.